Here is a 319-residue protein sequence, read N- to C-terminus: Acetyl-coenzyme A carboxylase carboxyl transferase subunit alpha (319 aa).

One can recognise a CoA carboxyltransferase C-terminal domain in the interval 35-296 (NIDEEVHRLR…KTQLLADLAD (262 aa)).

This sequence belongs to the AccA family. As to quaternary structure, acetyl-CoA carboxylase is a heterohexamer composed of biotin carboxyl carrier protein (AccB), biotin carboxylase (AccC) and two subunits each of ACCase subunit alpha (AccA) and ACCase subunit beta (AccD).

Its subcellular location is the cytoplasm. It carries out the reaction N(6)-carboxybiotinyl-L-lysyl-[protein] + acetyl-CoA = N(6)-biotinyl-L-lysyl-[protein] + malonyl-CoA. Its pathway is lipid metabolism; malonyl-CoA biosynthesis; malonyl-CoA from acetyl-CoA: step 1/1. Its function is as follows. Component of the acetyl coenzyme A carboxylase (ACC) complex. First, biotin carboxylase catalyzes the carboxylation of biotin on its carrier protein (BCCP) and then the CO(2) group is transferred by the carboxyltransferase to acetyl-CoA to form malonyl-CoA. The polypeptide is Acetyl-coenzyme A carboxylase carboxyl transferase subunit alpha (Cronobacter sakazakii (strain ATCC BAA-894) (Enterobacter sakazakii)).